A 603-amino-acid chain; its full sequence is Serine/threonine-protein kinase HAL4/SAT4 (603 aa).

Composition is skewed to polar residues over residues methionine 1 to threonine 15, arginine 30 to lysine 60, and threonine 68 to glycine 85. Disordered regions lie at residues methionine 1–valine 86, leucine 150–threonine 171, and aspartate 267–isoleucine 301. Positions asparagine 159–threonine 171 are enriched in low complexity. Positions proline 282–asparagine 296 are enriched in basic and acidic residues. The Protein kinase domain maps to glycine 316–glycine 590. ATP-binding positions include leucine 322–valine 330 and lysine 353. The active-site Proton acceptor is aspartate 449.

It belongs to the protein kinase superfamily. Ser/Thr protein kinase family.

The catalysed reaction is L-seryl-[protein] + ATP = O-phospho-L-seryl-[protein] + ADP + H(+). It carries out the reaction L-threonyl-[protein] + ATP = O-phospho-L-threonyl-[protein] + ADP + H(+). Functionally, promotes K(+) uptake, by the potassium transporter TRK1-TRK2, which leads to the subsequent cellular resistance to toxic cations such as Na(+), Li(+) and Ca(2+). The polypeptide is Serine/threonine-protein kinase HAL4/SAT4 (SAT4) (Saccharomyces cerevisiae (strain ATCC 204508 / S288c) (Baker's yeast)).